The primary structure comprises 361 residues: Peptide chain release factor 1 (361 aa).

N5-methylglutamine is present on Gln235.

This sequence belongs to the prokaryotic/mitochondrial release factor family. Post-translationally, methylated by PrmC. Methylation increases the termination efficiency of RF1.

It is found in the cytoplasm. Peptide chain release factor 1 directs the termination of translation in response to the peptide chain termination codons UAG and UAA. This chain is Peptide chain release factor 1, found in Rhodopseudomonas palustris (strain ATCC BAA-98 / CGA009).